We begin with the raw amino-acid sequence, 623 residues long: Chaperone protein HtpG (623 aa).

Positions 1–328 are a; substrate-binding; the sequence is MTQEKKKFDA…SEDLPLNISR (328 aa). The tract at residues 329-544 is b; that stretch reads ESLQHNSILD…ESAMDIRMER (216 aa). Positions 545–623 are c; sequence FLIEQKQIAN…DIVQKAILSL (79 aa).

Belongs to the heat shock protein 90 family. In terms of assembly, homodimer.

Its subcellular location is the cytoplasm. Functionally, molecular chaperone. Has ATPase activity. This Rickettsia canadensis (strain McKiel) protein is Chaperone protein HtpG.